We begin with the raw amino-acid sequence, 251 residues long: Prolactin-7C1 (251 aa).

Residues 1–30 form the signal peptide; the sequence is MLLSLTHPSFLAMLPMLLMSNLLQWEGVTS. The N-linked (GlcNAc...) asparagine glycan is linked to Asn57. 2 disulfide bridges follow: Cys101–Cys217 and Cys234–Cys242.

The protein belongs to the somatotropin/prolactin family. As to expression, expressed exclusively in the placenta. Expressed in spongiotrophoblast cells and trophoblast giant cells of the junctional zone and in labyrinthine trophoblast.

The protein localises to the secreted. This Mus musculus (Mouse) protein is Prolactin-7C1 (Prl7c1).